A 553-amino-acid polypeptide reads, in one-letter code: Salicylyl-CoA synthase / salicylate adenylyltransferase (553 aa).

Residue Gly-203 coordinates ATP. 246–247 (HN) contributes to the substrate binding site. Residues Gly-320, Val-342, Asp-426, Arg-441, and Lys-533 each contribute to the ATP site. Residue Lys-533 participates in substrate binding.

Belongs to the ATP-dependent AMP-binding enzyme family.

It catalyses the reaction salicylate + ATP + CoA = 2-hydroxybenzoyl-CoA + AMP + diphosphate. In terms of biological role, involved in the degradation of salicylate via a pathway involving coenzyme A derivative. Catalyzes the conversion of salicylate to salicyloyl-CoA via the formation of a salicylate-adenylate intermediate. The substrate specificity is strong, since benzoate, 3-hydroxybenzoate, 4-hydroxybenzoate, gentisate, 2-aminobenzoate, aminobenzoate, salicylamide, salicylaldoxime and 2-hydroxyphenyl acetate cannot substitute for salicylate. The polypeptide is Salicylyl-CoA synthase / salicylate adenylyltransferase (Streptomyces sp).